The following is a 96-amino-acid chain: Iron-sulfur cluster assembly protein CyaY (96 aa).

The protein belongs to the frataxin family.

Involved in iron-sulfur (Fe-S) cluster assembly. May act as a regulator of Fe-S biogenesis. The polypeptide is Iron-sulfur cluster assembly protein CyaY (Rickettsia bellii (strain RML369-C)).